A 73-amino-acid chain; its full sequence is DNA-directed RNA polymerase subunit omega (73 aa).

The protein belongs to the RNA polymerase subunit omega family. The RNAP catalytic core consists of 2 alpha, 1 beta, 1 beta' and 1 omega subunit. When a sigma factor is associated with the core the holoenzyme is formed, which can initiate transcription.

It catalyses the reaction RNA(n) + a ribonucleoside 5'-triphosphate = RNA(n+1) + diphosphate. Its function is as follows. Promotes RNA polymerase assembly. Latches the N- and C-terminal regions of the beta' subunit thereby facilitating its interaction with the beta and alpha subunits. The sequence is that of DNA-directed RNA polymerase subunit omega from Maridesulfovibrio salexigens (strain ATCC 14822 / DSM 2638 / NCIMB 8403 / VKM B-1763) (Desulfovibrio salexigens).